Here is a 441-residue protein sequence, read N- to C-terminus: Baicalein 7-O-glucuronosyltransferase (441 aa).

This sequence belongs to the UDP-glycosyltransferase family. As to quaternary structure, homodimer.

It catalyses the reaction baicalein + UDP-alpha-D-glucuronate = baicalin + UDP. With respect to regulation, inhibited by copper, zinc and iron, p-Chloromercuri-benzoic acid (PCMBA) and 4,4'-diisothiocyanostilbene-2,2'-disulfonic acid (DIDS), but not by N-ethylmaleimide (NEM), dithioerythritol (DTE), calcium or magnesium. Its function is as follows. Involved in the production of glucuronosylated baicalein, a flavonoid that shows antiallergic, anti-HIV and antitumor activities. Can use baicalein, scutellarein and wogonin as substrates, but not chrysin, apigenin, luteolin, quercetin, formononetin and daidzein. Highly specific for UDP-glucuronate (UDP-GlcUA) and no activity with UDP-glucose or UDP-galacturonic acid. This chain is Baicalein 7-O-glucuronosyltransferase (UBGAT-I), found in Scutellaria baicalensis (Baical skullcap).